A 200-amino-acid chain; its full sequence is ATP synthase subunit s, mitochondrial (200 aa).

Residues 1–25 (MMLFGKVSQQLCGIKKLPWSCDSRY) constitute a mitochondrion transit peptide. The tract at residues 1-61 (MMLFGKVSQQ…SEWLLRCGAM (61 aa)) is N-terminal domain. Gly-59 contributes to the Mg(2+) binding site. 4 LRR repeats span residues 62–87 (VRYHGQERWQTDYNHLPTGPLDKYKI), 88–116 (QAIDATNSCIMSIGFDHMVGLQHVEKIRL), 117–141 (CKCHFIEDDCLLRLGQLENLQKSIL), and 142–173 (EMEIISCGNITDKGIIASRHLRNLKYLLLSDL). Residue Thr-93 participates in Mg(2+) binding.

It belongs to the ATP synthase subunit s family. As to quaternary structure, homotetramer. Associates with ATP synthase.

Its subcellular location is the mitochondrion. It is found in the mitochondrion inner membrane. In terms of biological role, involved in regulation of mitochondrial membrane ATP synthase. Necessary for H(+) conduction of ATP synthase. Facilitates energy-driven catalysis of ATP synthesis by blocking a proton leak through an alternative proton exit pathway. This is ATP synthase subunit s, mitochondrial (DMAC2L) from Macaca fascicularis (Crab-eating macaque).